A 187-amino-acid chain; its full sequence is Threonylcarbamoyl-AMP synthase (187 aa).

Positions 4-187 (TPDLDAAVAT…DARTGQILRD (184 aa)) constitute a YrdC-like domain.

It belongs to the SUA5 family. TsaC subfamily.

Its subcellular location is the cytoplasm. The enzyme catalyses L-threonine + hydrogencarbonate + ATP = L-threonylcarbamoyladenylate + diphosphate + H2O. Its function is as follows. Required for the formation of a threonylcarbamoyl group on adenosine at position 37 (t(6)A37) in tRNAs that read codons beginning with adenine. Catalyzes the conversion of L-threonine, HCO(3)(-)/CO(2) and ATP to give threonylcarbamoyl-AMP (TC-AMP) as the acyladenylate intermediate, with the release of diphosphate. In Xanthomonas campestris pv. campestris (strain 8004), this protein is Threonylcarbamoyl-AMP synthase.